We begin with the raw amino-acid sequence, 876 residues long: Alanine--tRNA ligase (876 aa).

Zn(2+) contacts are provided by histidine 565, histidine 569, cysteine 667, and histidine 671.

This sequence belongs to the class-II aminoacyl-tRNA synthetase family. Zn(2+) serves as cofactor.

It localises to the cytoplasm. It carries out the reaction tRNA(Ala) + L-alanine + ATP = L-alanyl-tRNA(Ala) + AMP + diphosphate. Functionally, catalyzes the attachment of alanine to tRNA(Ala) in a two-step reaction: alanine is first activated by ATP to form Ala-AMP and then transferred to the acceptor end of tRNA(Ala). Also edits incorrectly charged Ser-tRNA(Ala) and Gly-tRNA(Ala) via its editing domain. In Staphylococcus aureus (strain USA300), this protein is Alanine--tRNA ligase.